We begin with the raw amino-acid sequence, 347 residues long: NADH-ubiquinone oxidoreductase chain 2 (347 aa).

A run of 10 helical transmembrane segments spans residues 13–33 (VILG…WIGF), 59–79 (YFFT…LNLM), 96–116 (MIMT…FWVP), 122–142 (IPLS…LTVL), 149–169 (INLT…GWGG), 178–198 (IMAY…IYNP), 200–220 (MTLL…MLFM), 240–260 (IVTI…LTGF), 276–296 (IILP…YMRL), and 325–345 (LLTP…MIII).

The protein belongs to the complex I subunit 2 family. In terms of assembly, core subunit of respiratory chain NADH dehydrogenase (Complex I) which is composed of 45 different subunits. Interacts with TMEM242.

It is found in the mitochondrion inner membrane. It catalyses the reaction a ubiquinone + NADH + 5 H(+)(in) = a ubiquinol + NAD(+) + 4 H(+)(out). Functionally, core subunit of the mitochondrial membrane respiratory chain NADH dehydrogenase (Complex I) which catalyzes electron transfer from NADH through the respiratory chain, using ubiquinone as an electron acceptor. Essential for the catalytic activity and assembly of complex I. The chain is NADH-ubiquinone oxidoreductase chain 2 from Molossus ater (Black mastiff bat).